Here is a 301-residue protein sequence, read N- to C-terminus: UDP-N-acetylenolpyruvoylglucosamine reductase 1 (301 aa).

The region spanning 29 to 196 (KIGGPADILI…LEAEFQLQIG (168 aa)) is the FAD-binding PCMH-type domain. R174 is a catalytic residue. The Proton donor role is filled by S225. E295 is a catalytic residue.

Belongs to the MurB family. FAD is required as a cofactor.

It localises to the cytoplasm. The enzyme catalyses UDP-N-acetyl-alpha-D-muramate + NADP(+) = UDP-N-acetyl-3-O-(1-carboxyvinyl)-alpha-D-glucosamine + NADPH + H(+). The protein operates within cell wall biogenesis; peptidoglycan biosynthesis. Cell wall formation. The protein is UDP-N-acetylenolpyruvoylglucosamine reductase 1 of Bacillus thuringiensis subsp. konkukian (strain 97-27).